A 444-amino-acid chain; its full sequence is Protein kinase C and casein kinase substrate in neurons protein 1 (444 aa).

Phosphoserine occurs at positions 2 and 79. An F-BAR domain is found at 13-283; that stretch reads EETTDSFWEV…AIRGADAQED (271 aa). Residues 26–275 adopt a coiled-coil conformation; that stretch reads KRTVKRIDDG…HVYRELEQAI (250 aa). 2 disordered regions span residues 173 to 194 and 309 to 386; these read REMN…LQDK and LPHT…DDSK. Threonine 184 bears the Phosphothreonine mark. A compositionally biased stretch (basic and acidic residues) spans 314 to 324; that stretch reads TKKEKQPKKAE. Residues 329 to 351 show a composition bias toward polar residues; sequence TNATGAVESTSQAGDRGSVSSYD. 5 positions are modified to phosphoserine: serine 346, serine 348, serine 349, serine 361, and serine 365. Residues 385-444 enclose the SH3 domain; that stretch reads SKGVRVRALYDYDGQEQDELSFKAGDELTKLGEEDEQGWCRGRLDSGQLGLYPANYVEAI. Phosphotyrosine is present on tyrosine 394. 2 positions are modified to phosphoserine: serine 405 and serine 430.

The protein belongs to the PACSIN family. Homodimer. May form heterooligomers with other PACSINs. Interacts with both COBL and DBNL. Identified in a complex composed of COBL, PACSIN1 and WASL. Interacts (via SH3 domain) with SYNJ1 and WASL. Interacts (via SH3 domain) with DNM1; the interaction is reduced by DNM1 phosphorylation. Interacts with DNM2 and DNM3. Interacts with MAPT. Interacts with EHD1 and EHD3. Interacts with TRPV4. Phosphorylated by casein kinase 2 (CK2) and protein kinase C (PKC).

Its subcellular location is the cytoplasm. It is found in the cell projection. The protein localises to the synapse. The protein resides in the synaptosome. It localises to the ruffle membrane. Its subcellular location is the membrane. It is found in the cytoplasmic vesicle membrane. The protein localises to the cytosol. The protein resides in the cell membrane. Its function is as follows. Binds to membranes via its F-BAR domain and mediates membrane tubulation. Plays a role in the reorganization of the microtubule cytoskeleton via its interaction with MAPT; this decreases microtubule stability and inhibits MAPT-induced microtubule polymerization. Plays a role in cellular transport processes by recruiting DNM1, DNM2 and DNM3 to membranes. Plays a role in the reorganization of the actin cytoskeleton and in neuron morphogenesis via its interaction with COBL and WASL, and by recruiting COBL to the cell cortex. Plays a role in the regulation of neurite formation, neurite branching and the regulation of neurite length. Required for normal synaptic vesicle endocytosis; this process retrieves previously released neurotransmitters to accommodate multiple cycles of neurotransmission. Required for normal excitatory and inhibitory synaptic transmission. This is Protein kinase C and casein kinase substrate in neurons protein 1 (Pacsin1) from Pongo abelii (Sumatran orangutan).